Here is a 971-residue protein sequence, read N- to C-terminus: UPF0182 protein RER_22310 (971 aa).

The next 7 helical transmembrane spans lie at 16–36 (ILLV…RLIG), 61–81 (FVLF…AMLL), 112–132 (LFGV…AQAN), 172–192 (WLFV…YVFG), 209–229 (VQLA…YWFD), 257–277 (AKLI…ASIF), and 286–306 (MAVA…PMIV). Positions 890–927 (GSAATVTQPAPDPDTGAQPETPTTPTAPAPPASSDDVT) are disordered.

This sequence belongs to the UPF0182 family.

It localises to the cell membrane. This Rhodococcus erythropolis (strain PR4 / NBRC 100887) protein is UPF0182 protein RER_22310.